Here is a 335-residue protein sequence, read N- to C-terminus: MSRSILLLPLAIALGLGFFIARPESTVTPVAEAPASSPAANLTAARPAQRTATGAAPQVMAKLPASFKGTEVDGQFQLDAAGNLIIGPELRQLFDYFLSAIGEEPLKQSIERLRRHIAAQLPEPAQAQALAVLNQYLNYKRQLVDFEAQHPRVADLASMRDRLSAVRALRAHAFDPAIHQAFFGLEEAYDHFSLERLAIRFDPALDSDAKGRAIDQLRAGLPAELQDLLIPQLQTELREQTTALLANGAGPQQLRQLRQQLVGSEAADRLEALDLQRRQWQQRVASYQQERTRIETARGLDEVERRAAVERLEAQRFSDSERLRLLAVVQEDRTR.

The chain crosses the membrane as a helical span at residues 7–23 (LLPLAIALGLGFFIARP).

Belongs to the lipase chaperone family.

Its subcellular location is the cell inner membrane. Its function is as follows. May be involved in the folding of the extracellular lipase during its passage through the periplasm. In Ectopseudomonas mendocina (Pseudomonas mendocina), this protein is Lipase chaperone (lifO).